The following is a 43-amino-acid chain: Photosystem I reaction center subunit IX (43 aa).

A helical membrane pass occupies residues 7-27 (YLSTAPVLSTIWFGSLAGLLI).

This sequence belongs to the PsaJ family.

The protein localises to the plastid. Its subcellular location is the chloroplast thylakoid membrane. Its function is as follows. May help in the organization of the PsaE and PsaF subunits. The sequence is that of Photosystem I reaction center subunit IX from Vitis vinifera (Grape).